A 358-amino-acid chain; its full sequence is Zinc-type alcohol dehydrogenase-like protein YogA (358 aa).

Belongs to the zinc-containing alcohol dehydrogenase family. Quinone oxidoreductase subfamily.

The protein operates within secondary metabolite biosynthesis. Its function is as follows. Zinc-type alcohol dehydrogenase-like protein; part of the gene cluster that mediates the biosynthesis of phomenoic acid, a long chain aliphatic carboxylic acid that does not appear to be essential for pathogenicity but may play a role in allowing to outcompete other fungi in the environmental niche via its antifungal properties. The polyketide synthase produces the long methylated aliphatic carboxylic acid chain of phomenoic acid. The cluster-specific cytochrome P450 monooxygenase may then hydroxylate the methyl group of carbon 31. The putative dehydrogenase YogA, which has no obvious role in phomenoic acid biosynthesis, may further modify phomenoic acid to produce a compound not identified yet. The chain is Zinc-type alcohol dehydrogenase-like protein YogA from Leptosphaeria maculans (strain JN3 / isolate v23.1.3 / race Av1-4-5-6-7-8) (Blackleg fungus).